The primary structure comprises 312 residues: Zinc-finger homeodomain protein 9 (312 aa).

The interval 1-27 (MLEVRSMDMTPKSPEPESETPTRIQPA) is disordered. Serine 13 carries the phosphoserine modification. The ZF-HD dimerization-type; degenerate zinc-finger motif lies at 52 to 103 (YKECLKNHAAAIGGHALDGCGEFMPSPSSTPSDPTSLKCAACGCHRNFHRRE). Disordered regions lie at residues 128 to 155 (QPHH…PPPI) and 253 to 312 (FSGG…SSSS). Residues 136 to 155 (PPPLAPPLPRSPNSSSPPPI) show a composition bias toward pro residues. Residues 192-255 (RKRFRTKFSS…NNKNSFKFSG (64 aa)) constitute a DNA-binding region (homeobox). A Phosphoserine modification is found at serine 273.

As to quaternary structure, homo- and heterodimer with other ZFHD proteins. Interacts with MIF3; this interaction prevents nuclear localization and DNA-binding to inhibit transcription regulation activity. Binds to ZHD1, ZHD2 and ZHD11. Mostly expressed in flowers, stems and inflorescence and, to a lower extent, in leaves and stems.

It is found in the nucleus. Putative transcription factor. The chain is Zinc-finger homeodomain protein 9 (ZHD9) from Arabidopsis thaliana (Mouse-ear cress).